A 352-amino-acid chain; its full sequence is Homoserine O-acetyltransferase (352 aa).

The AB hydrolase-1 domain maps to 37 to 330; it reads NAVLVCHALT…APHGHDTFLI (294 aa). Residue serine 133 is the Nucleophile of the active site. Arginine 206 lines the substrate pocket. Residues aspartate 296 and histidine 325 contribute to the active site. Aspartate 326 is a binding site for substrate.

Belongs to the AB hydrolase superfamily. MetX family. Homodimer.

It localises to the cytoplasm. It catalyses the reaction L-homoserine + acetyl-CoA = O-acetyl-L-homoserine + CoA. It participates in amino-acid biosynthesis; L-methionine biosynthesis via de novo pathway; O-acetyl-L-homoserine from L-homoserine: step 1/1. Functionally, transfers an acetyl group from acetyl-CoA to L-homoserine, forming acetyl-L-homoserine. The polypeptide is Homoserine O-acetyltransferase (Salinibacter ruber (strain DSM 13855 / M31)).